The primary structure comprises 183 residues: Large ribosomal subunit protein uL5 (183 aa).

Belongs to the universal ribosomal protein uL5 family. Part of the 50S ribosomal subunit; part of the 5S rRNA/L5/L18/L25 subcomplex. Contacts the 5S rRNA and the P site tRNA. Forms a bridge to the 30S subunit in the 70S ribosome.

In terms of biological role, this is one of the proteins that bind and probably mediate the attachment of the 5S RNA into the large ribosomal subunit, where it forms part of the central protuberance. In the 70S ribosome it contacts protein S13 of the 30S subunit (bridge B1b), connecting the 2 subunits; this bridge is implicated in subunit movement. Contacts the P site tRNA; the 5S rRNA and some of its associated proteins might help stabilize positioning of ribosome-bound tRNAs. The sequence is that of Large ribosomal subunit protein uL5 from Legionella pneumophila (strain Lens).